The following is a 456-amino-acid chain: Methylenetetrahydrofolate--tRNA-(uracil-5-)-methyltransferase TrmFO (456 aa).

Residue 12-17 (GGGLAG) participates in FAD binding.

The protein belongs to the MnmG family. TrmFO subfamily. FAD serves as cofactor.

It is found in the cytoplasm. It carries out the reaction uridine(54) in tRNA + (6R)-5,10-methylene-5,6,7,8-tetrahydrofolate + NADH + H(+) = 5-methyluridine(54) in tRNA + (6S)-5,6,7,8-tetrahydrofolate + NAD(+). It catalyses the reaction uridine(54) in tRNA + (6R)-5,10-methylene-5,6,7,8-tetrahydrofolate + NADPH + H(+) = 5-methyluridine(54) in tRNA + (6S)-5,6,7,8-tetrahydrofolate + NADP(+). Its function is as follows. Catalyzes the folate-dependent formation of 5-methyl-uridine at position 54 (M-5-U54) in all tRNAs. In Picosynechococcus sp. (strain ATCC 27264 / PCC 7002 / PR-6) (Agmenellum quadruplicatum), this protein is Methylenetetrahydrofolate--tRNA-(uracil-5-)-methyltransferase TrmFO.